We begin with the raw amino-acid sequence, 460 residues long: Signal recognition particle 54 kDa protein (460 aa).

GTP contacts are provided by residues 104 to 111 (GLQGSGKT), 184 to 188 (DTAGR), and 242 to 245 (TKLD).

Belongs to the GTP-binding SRP family. SRP54 subfamily. As to quaternary structure, part of the signal recognition particle protein translocation system, which is composed of SRP and FtsY. Archaeal SRP consists of a 7S RNA molecule of 300 nucleotides and two protein subunits: SRP54 and SRP19.

It localises to the cytoplasm. The enzyme catalyses GTP + H2O = GDP + phosphate + H(+). Involved in targeting and insertion of nascent membrane proteins into the cytoplasmic membrane. Binds to the hydrophobic signal sequence of the ribosome-nascent chain (RNC) as it emerges from the ribosomes. The SRP-RNC complex is then targeted to the cytoplasmic membrane where it interacts with the SRP receptor FtsY. The chain is Signal recognition particle 54 kDa protein from Halobacterium salinarum (strain ATCC 29341 / DSM 671 / R1).